Here is a 300-residue protein sequence, read N- to C-terminus: Probable alpha-L-glutamate ligase (300 aa).

Residues Leu-104–Glu-287 enclose the ATP-grasp domain. ATP-binding positions include Lys-141, Glu-178–Tyr-179, Asp-187, and Arg-211–Asn-213. Residues Asp-248, Glu-260, and Asn-262 each coordinate Mg(2+). Mn(2+)-binding residues include Asp-248, Glu-260, and Asn-262.

It belongs to the RimK family. Mg(2+) serves as cofactor. It depends on Mn(2+) as a cofactor.

In Enterobacter sp. (strain 638), this protein is Probable alpha-L-glutamate ligase.